The chain runs to 249 residues: Ubiquinone biosynthesis O-methyltransferase (249 aa).

The interval 1–23 is disordered; the sequence is MTSPSQVLPASAGKPTGPNADPK. Arginine 52, glycine 71, aspartate 92, and methionine 136 together coordinate S-adenosyl-L-methionine.

This sequence belongs to the methyltransferase superfamily. UbiG/COQ3 family.

The catalysed reaction is a 3-demethylubiquinol + S-adenosyl-L-methionine = a ubiquinol + S-adenosyl-L-homocysteine + H(+). It carries out the reaction a 3-(all-trans-polyprenyl)benzene-1,2-diol + S-adenosyl-L-methionine = a 2-methoxy-6-(all-trans-polyprenyl)phenol + S-adenosyl-L-homocysteine + H(+). It participates in cofactor biosynthesis; ubiquinone biosynthesis. O-methyltransferase that catalyzes the 2 O-methylation steps in the ubiquinone biosynthetic pathway. This Cupriavidus pinatubonensis (strain JMP 134 / LMG 1197) (Cupriavidus necator (strain JMP 134)) protein is Ubiquinone biosynthesis O-methyltransferase.